A 201-amino-acid chain; its full sequence is FMN-dependent NADH:quinone oxidoreductase (201 aa).

FMN is bound by residues serine 10, 16–18, 96–99, and 140–143; these read SQS, MYNF, and SRGG.

The protein belongs to the azoreductase type 1 family. In terms of assembly, homodimer. Requires FMN as cofactor.

The enzyme catalyses 2 a quinone + NADH + H(+) = 2 a 1,4-benzosemiquinone + NAD(+). It catalyses the reaction N,N-dimethyl-1,4-phenylenediamine + anthranilate + 2 NAD(+) = 2-(4-dimethylaminophenyl)diazenylbenzoate + 2 NADH + 2 H(+). Quinone reductase that provides resistance to thiol-specific stress caused by electrophilic quinones. Functionally, also exhibits azoreductase activity. Catalyzes the reductive cleavage of the azo bond in aromatic azo compounds to the corresponding amines. The chain is FMN-dependent NADH:quinone oxidoreductase from Shigella flexneri serotype 5b (strain 8401).